Here is a 199-residue protein sequence, read N- to C-terminus: Golgi to ER traffic protein 1 (199 aa).

The Lumenal segment spans residues 1-11 (MLLPDLHPYTI). A helical transmembrane segment spans residues 12–31 (LLSIFIVLLLKQLVASIGKS). Over 32–115 (TIKEFVWLVY…SIDKVSNALL (84 aa)) the chain is Cytoplasmic. A coiled-coil region spans residues 66–116 (EKRAISAQDEYAKWTKLNRQADKLSAELQKLNQEIQQQKASIDKVSNALLL). Residues 116-136 (LVLTTLPIWVARVLYRNTHLF) form a helical membrane-spanning segment. Residues 137–160 (YIRQGIFPKYVEWVLALPFLPNGA) are Lumenal-facing. The helical transmembrane segment at 161–177 (VGLTIWMFAVNSVVSNF) threads the bilayer. Residues 178–199 (AFLVSFPFAKKVSKPVRDTKIE) are Cytoplasmic-facing.

This sequence belongs to the WRB/GET1 family. As to quaternary structure, component of the Golgi to ER traffic (GET) complex, which is composed of GET1, GET2 and GET3. Within the complex, GET1 and GET2 form a heterotetramer which is stabilized by phosphatidylinositol binding and which binds to the GET3 homodimer.

The protein localises to the endoplasmic reticulum membrane. It localises to the golgi apparatus membrane. In terms of biological role, required for the post-translational delivery of tail-anchored (TA) proteins to the endoplasmic reticulum. Together with GET2, acts as a membrane receptor for soluble GET3, which recognizes and selectively binds the transmembrane domain of TA proteins in the cytosol. The GET complex cooperates with the HDEL receptor ERD2 to mediate the ATP-dependent retrieval of resident ER proteins that contain a C-terminal H-D-E-L retention signal from the Golgi to the ER. This Candida dubliniensis (strain CD36 / ATCC MYA-646 / CBS 7987 / NCPF 3949 / NRRL Y-17841) (Yeast) protein is Golgi to ER traffic protein 1.